Here is a 318-residue protein sequence, read N- to C-terminus: Malonyl CoA-acyl carrier protein transacylase, mitochondrial (318 aa).

This sequence belongs to the FabD family.

Its subcellular location is the mitochondrion. The enzyme catalyses holo-[ACP] + malonyl-CoA = malonyl-[ACP] + CoA. It functions in the pathway lipid metabolism; fatty acid biosynthesis. Functionally, involved in biosynthesis of fatty acids in mitochondria. This is Malonyl CoA-acyl carrier protein transacylase, mitochondrial (mct1) from Schizosaccharomyces pombe (strain 972 / ATCC 24843) (Fission yeast).